We begin with the raw amino-acid sequence, 337 residues long: GTPase Obg (337 aa).

The Obg domain maps to 4–162; that stretch reads SNFIDYVKVC…AWVILELKVL (159 aa). In terms of domain architecture, OBG-type G spans 163–329; sequence ADVGLVGFPN…LKDLLWTTMN (167 aa). GTP is bound by residues 169-176, 194-198, 216-219, 283-286, and 310-312; these read GFPNAGKS, FTTLA, DIPG, SKSD, and SSY. Mg(2+) contacts are provided by Ser176 and Thr196.

The protein belongs to the TRAFAC class OBG-HflX-like GTPase superfamily. OBG GTPase family. Monomer. Mg(2+) is required as a cofactor.

Its subcellular location is the cytoplasm. In terms of biological role, an essential GTPase which binds GTP, GDP and possibly (p)ppGpp with moderate affinity, with high nucleotide exchange rates and a fairly low GTP hydrolysis rate. Plays a role in control of the cell cycle, stress response, ribosome biogenesis and in those bacteria that undergo differentiation, in morphogenesis control. In Cytophaga hutchinsonii (strain ATCC 33406 / DSM 1761 / CIP 103989 / NBRC 15051 / NCIMB 9469 / D465), this protein is GTPase Obg.